Reading from the N-terminus, the 218-residue chain is Small ribosomal subunit protein uS3c (218 aa).

The region spanning 47-118 (VRRHMKNYSN…KLNISIAKVA (72 aa)) is the KH type-2 domain.

It belongs to the universal ribosomal protein uS3 family. As to quaternary structure, part of the 30S ribosomal subunit.

It localises to the plastid. The protein resides in the chloroplast. The sequence is that of Small ribosomal subunit protein uS3c (rps3) from Ginkgo biloba (Ginkgo).